Consider the following 615-residue polypeptide: Homologous recombination OB-fold protein (615 aa).

Disordered regions lie at residues 42–75, 213–326, and 546–590; these read LRPV…PRLC, PWPS…PVTQ, and DFLE…FPEE. The residue at position 47 (Ser-47) is a Phosphoserine. Composition is skewed to polar residues over residues 47 to 71, 232 to 241, and 257 to 275; these read SRPQ…NQSV, SCVSTSQQRG, and IRSS…SPRA. Positions 302-317 are enriched in low complexity; the sequence is SSRAPVSSVESPVSTP.

As to quaternary structure, interacts with MCM8; this interaction is necessary for MCM8-MCM9 helicase complex recruitment to DNA damage sites. Interacts with RPA1; this interaction associates HROB with the RPA complex.

The protein localises to the nucleus. Its subcellular location is the chromosome. Its function is as follows. DNA-binding protein involved in homologous recombination that acts by recruiting the MCM8-MCM9 helicase complex to sites of DNA damage to promote DNA repair synthesis. The polypeptide is Homologous recombination OB-fold protein (Mus musculus (Mouse)).